The primary structure comprises 150 residues: Large ribosomal subunit protein bL9 (150 aa).

It belongs to the bacterial ribosomal protein bL9 family.

Its function is as follows. Binds to the 23S rRNA. The chain is Large ribosomal subunit protein bL9 from Hamiltonella defensa subsp. Acyrthosiphon pisum (strain 5AT).